Here is a 100-residue protein sequence, read N- to C-terminus: Small ribosomal subunit protein uS14c (100 aa).

Belongs to the universal ribosomal protein uS14 family. Part of the 30S ribosomal subunit.

The protein localises to the plastid. Its subcellular location is the chloroplast. Functionally, binds 16S rRNA, required for the assembly of 30S particles. The protein is Small ribosomal subunit protein uS14c of Lobularia maritima (Sweet alyssum).